Here is a 175-residue protein sequence, read N- to C-terminus: Small ribosomal subunit protein uS5 (175 aa).

Residues 11–74 enclose the S5 DRBM domain; it reads LSEVLVDVNR…QAAKKRMMKV (64 aa).

Belongs to the universal ribosomal protein uS5 family. As to quaternary structure, part of the 30S ribosomal subunit. Contacts proteins S4 and S8.

Functionally, with S4 and S12 plays an important role in translational accuracy. Located at the back of the 30S subunit body where it stabilizes the conformation of the head with respect to the body. The chain is Small ribosomal subunit protein uS5 from Rickettsia typhi (strain ATCC VR-144 / Wilmington).